The primary structure comprises 332 residues: L-lactate dehydrogenase C chain (332 aa).

S2 bears the Blocked amino end (Ser) mark. NAD(+) is bound by residues 29–57 and R99; that span reads GNVG…DTNK. Residues R106, N138, and R169 each coordinate substrate. N138 serves as a coordination point for NAD(+). H193 (proton acceptor) is an active-site residue. T248 is a substrate binding site.

This sequence belongs to the LDH/MDH superfamily. LDH family. Homotetramer. Interacts with RABL2/RABL2A; binds preferentially to GTP-bound RABL2. Expressed within the midpiece of sperm tail (at protein level).

Its subcellular location is the cytoplasm. The enzyme catalyses (S)-lactate + NAD(+) = pyruvate + NADH + H(+). Its pathway is fermentation; pyruvate fermentation to lactate; (S)-lactate from pyruvate: step 1/1. Functionally, possible role in sperm motility. This chain is L-lactate dehydrogenase C chain (Ldhc), found in Mus musculus (Mouse).